The sequence spans 841 residues: Toll-like receptor 4 (841 aa).

The first 23 residues, 1–23, serve as a signal peptide directing secretion; that stretch reads MMARVRLAAALIPATAILSCLRT. At 24–632 the chain is on the extracellular side; it reads ESWDPCVQVV…FRNATCQMSK (609 aa). A disulfide bridge links cysteine 29 with cysteine 40. N-linked (GlcNAc...) asparagine glycosylation is found at asparagine 35 and asparagine 73. LRR repeat units follow at residues 55-76, 79-100, 103-124, 127-148, 151-172, 176-197, and 205-225; these read STKMLDLSFNYLRHLGSHNFSS, ELQVLDLSRCEIKIIEDDTFQG, HLSTLILTGNPIQSLAWGAFSG, SLQKLVAVETNLVSLNDFPIGH, TLKELNVAHNFIHSFKLPEYFS, NLEHLDLSNNKIQNIYYEDVKV, and NLSLDLSLNPLDFIEPGTFKE. Asparagine 205, asparagine 238, asparagine 282, and asparagine 309 each carry an N-linked (GlcNAc...) asparagine glycan. Cysteine 281 and cysteine 306 are disulfide-bonded. LRR repeat units lie at residues 352–373, 374–395, 400–422, 423–444, 448–469, 472–495, 497–518, 521–542, and 545–568; these read SLKKFVFTDNKDISSFTEFQLP, SLQYLDLRRNHLSFKGCCSHAD, NLKHLDLSFNDVITLGSNFMGLE, KLEHLDFQHSTLKQINAFSVFL, NLRYLDISYTNVRIVFHGIFTG, SLKTLKMAGNTFQDNLLPDIFTEL, NLTVLDLSKCQLEQVAQTAFHS, SLQVLNMSHNKLLSLDTFLYEP, and LLRILDCSFNRIMDSKEQDLQNLP. Cysteine 390 and cysteine 391 are disulfide-bonded. 2 N-linked (GlcNAc...) asparagine glycosylation sites follow: asparagine 497 and asparagine 526. N-linked (GlcNAc...) asparagine glycosylation is found at asparagine 570 and asparagine 575. Residues 579–630 form the LRRCT domain; it reads NAFACVCEHQRFLQWVKDQRQLLVGAEQMMCAEPLDMKDMPVLSFRNATCQM. Cystine bridges form between cysteine 583-cysteine 609 and cysteine 585-cysteine 628. Asparagine 625 is a glycosylation site (N-linked (GlcNAc...) asparagine). The helical transmembrane segment at 633–653 threads the bilayer; that stretch reads MIISVSVVTVLLVSVVGVLVY. Topologically, residues 654-841 are cytoplasmic; it reads KFYFHLMLLA…TNPQEATTST (188 aa). One can recognise a TIR domain in the interval 673 to 816; the sequence is STYGAFVIYS…VFWRRLRKAL (144 aa). Residues 820 to 841 form a disordered region; the sequence is KPQSPEGTADAETNPQEATTST. The span at 830–841 shows a compositional bias: polar residues; that stretch reads AETNPQEATTST.

The protein belongs to the Toll-like receptor family. Belongs to the lipopolysaccharide (LPS) receptor, a multi-protein complex containing at least CD14, LY96 and TLR4. Binding to bacterial LPS leads to homodimerization. Interacts with LY96 via the extracellular domain. Interacts with MYD88 and TIRAP via their respective TIR domains. Interacts with TICAM2. Interacts with NOX4. Interacts with CNPY3 and HSP90B1; this interaction is required for proper folding in the endoplasmic reticulum. Interacts with MAP3K21; this interaction leads to negative regulation of TLR4 signaling. Interacts with CD36, following CD36 stimulation by oxLDL or amyloid-beta 42, and forms a heterodimer with TLR6. The trimeric complex is internalized and triggers inflammatory response. LYN kinase activity facilitates TLR4-TLR6 heterodimerization and signal initiation. Interacts with TICAM1 in response to LPS in a WDFY1-dependent manner. Interacts with WDFY1 in response to LPS. Interacts with SMPDL3B. Interacts with CEACAM1; upon lipopolysaccharide stimulation, forms a complex including TLR4 and the phosphorylated form of SYK and CEACAM1, which in turn, recruits PTPN6 that dephosphorylates SYK, reducing the production of reactive oxygen species (ROS) and lysosome disruption, which in turn, reduces the activity of the inflammasome. Interacts with RFTN1; the interaction occurs in response to lipopolysaccharide stimulation. Interacts with SCIMP; the interaction occurs in response to lipopolysaccharide stimulation and is enhanced by phosphorylation of SCIMP by LYN. This interaction facilitates the phosphorylation of TLR4 by LYN which elicits a selective cytokine response in macrophages. Interacts with TRAF3IP3. Interacts with TREM1; this interaction enhances TLR4-mediated inflammatory response. Interacts with ZG16B/PAUF. Interacts with CD82; this interaction inhibits TLR4-mediated signaling pathway. Phosphorylated on tyrosine residues by LYN after binding lipopolysaccharide. Post-translationally, ubiquitinated by RNF128 via 'Lys-28'-linked polyubiquitin chains, leading to proteasomal degradation.

The protein localises to the cell membrane. It localises to the early endosome. It is found in the cell projection. The protein resides in the ruffle. Transmembrane receptor that functions as a pattern recognition receptor recognizing pathogen- and damage-associated molecular patterns (PAMPs and DAMPs) to induce innate immune responses via downstream signaling pathways. At the plasma membrane, cooperates with LY96 to mediate the innate immune response to bacterial lipopolysaccharide (LPS). Also involved in LPS-independent inflammatory responses triggered by free fatty acids, such as palmitate, and Ni(2+). Mechanistically, acts via MYD88, TIRAP and TRAF6, leading to NF-kappa-B activation, cytokine secretion and the inflammatory response. Alternatively, CD14-mediated TLR4 internalization via endocytosis is associated with the initiation of a MYD88-independent signaling via the TICAM1-TBK1-IRF3 axis leading to type I interferon production. In addition to the secretion of proinflammatory cytokines, initiates the activation of NLRP3 inflammasome and formation of a positive feedback loop between autophagy and NF-kappa-B signaling cascade. In complex with TLR6, promotes inflammation in monocytes/macrophages by associating with TLR6 and the receptor CD86. Upon ligand binding, such as oxLDL or amyloid-beta 42, the TLR4:TLR6 complex is internalized and triggers inflammatory response, leading to NF-kappa-B-dependent production of CXCL1, CXCL2 and CCL9 cytokines, via MYD88 signaling pathway, and CCL5 cytokine, via TICAM1 signaling pathway. In myeloid dendritic cells, vesicular stomatitis virus glycoprotein G but not LPS promotes the activation of IRF7, leading to type I IFN production in a CD14-dependent manner. The sequence is that of Toll-like receptor 4 (TLR4) from Boselaphus tragocamelus (Nilgai).